The chain runs to 461 residues: Ornithine decarboxylase (461 aa).

Lysine 69 carries the N6-(pyridoxal phosphate)lysine modification. Pyridoxal 5'-phosphate is bound by residues serine 200, glycine 237, and 274 to 277; that span reads EPGR. The residue at position 303 (serine 303) is a Phosphoserine; by CK2. 331–332 is a substrate binding site; that stretch reads YD. Residue cysteine 360 is the Proton donor; shared with dimeric partner of the active site. Cysteine 360 carries the S-nitrosocysteine modification. Substrate is bound at residue aspartate 361. Position 389 (tyrosine 389) interacts with pyridoxal 5'-phosphate.

Belongs to the Orn/Lys/Arg decarboxylase class-II family. As to quaternary structure, homodimer. Only the dimer is catalytically active, as the active sites are constructed of residues from both monomers. Pyridoxal 5'-phosphate serves as cofactor.

The catalysed reaction is L-ornithine + H(+) = putrescine + CO2. The protein operates within amine and polyamine biosynthesis; putrescine biosynthesis via L-ornithine pathway; putrescine from L-ornithine: step 1/1. Its activity is regulated as follows. Inhibited by antizymes (AZs) OAZ1, OAZ2 and OAZ3 in response to polyamine levels. AZs inhibit the assembly of the functional homodimer by binding to ODC monomers. Additionally, OAZ1 targets ODC monomers for ubiquitin-independent proteolytic destruction by the 26S proteasome. Functionally, catalyzes the first and rate-limiting step of polyamine biosynthesis that converts ornithine into putrescine, which is the precursor for the polyamines, spermidine and spermine. Polyamines are essential for cell proliferation and are implicated in cellular processes, ranging from DNA replication to apoptosis. This Rattus norvegicus (Rat) protein is Ornithine decarboxylase (Odc1).